Here is a 325-residue protein sequence, read N- to C-terminus: Zinc-type alcohol dehydrogenase-like protein C337.11 (325 aa).

This sequence belongs to the zinc-containing alcohol dehydrogenase family. Quinone oxidoreductase subfamily.

Its subcellular location is the cytoplasm. It is found in the nucleus. The sequence is that of Zinc-type alcohol dehydrogenase-like protein C337.11 from Schizosaccharomyces pombe (strain 972 / ATCC 24843) (Fission yeast).